Consider the following 93-residue polypeptide: Small ribosomal subunit protein bS18 (93 aa).

This sequence belongs to the bacterial ribosomal protein bS18 family. In terms of assembly, part of the 30S ribosomal subunit. Forms a tight heterodimer with protein bS6.

Functionally, binds as a heterodimer with protein bS6 to the central domain of the 16S rRNA, where it helps stabilize the platform of the 30S subunit. This Variovorax paradoxus (strain S110) protein is Small ribosomal subunit protein bS18.